A 269-amino-acid chain; its full sequence is UPF0761 membrane protein NTHI0384 (269 aa).

Helical transmembrane passes span 32-52 (MLAI…FPVF), 89-109 (MSAV…NNID), 128-148 (FAIY…SIGI), 168-188 (LLSF…YTVV), 203-223 (FLAA…VVTF), and 232-252 (AMAT…VVLV).

It belongs to the UPF0761 family.

The protein localises to the cell inner membrane. The chain is UPF0761 membrane protein NTHI0384 from Haemophilus influenzae (strain 86-028NP).